Consider the following 666-residue polypeptide: Zinc finger MYM-type protein 5 (666 aa).

Residues Lys85, Lys88, Lys146, and Lys163 each participate in a glycyl lysine isopeptide (Lys-Gly) (interchain with G-Cter in SUMO2) cross-link. The disordered stretch occupies residues 87–106 (EKPQGNYSVIPPPSRDLASQ). Residues 191–212 (SPDSWISQSASFPRNQKQPGVD) form a disordered region. Positions 194–208 (SWISQSASFPRNQKQ) are enriched in polar residues. A Glycyl lysine isopeptide (Lys-Gly) (interchain with G-Cter in SUMO2) cross-link involves residue Lys222. 4 consecutive MYM-type zinc fingers follow at residues 262-296 (HLFCCTTCLSSFSHKRTQNTRSVICKKFASTKKAD), 308-348 (QEFC…RHEV), 355-390 (HKLCSNHCFNKYRLANGLIMNCCEHCGEYMPSKSTG), and 401-428 (KRFCCQSCINEYKQMMETKSKKLTASEN). Glycyl lysine isopeptide (Lys-Gly) (interchain with G-Cter in SUMO2) cross-links involve residues Lys440, Lys452, Lys459, and Lys549.

As to quaternary structure, interacts (via N-terminal 120 amino acid region) with ETV5 (via C-terminal).

The protein resides in the nucleus. In terms of biological role, functions as a transcriptional regulator. This is Zinc finger MYM-type protein 5 (ZMYM5) from Macaca fascicularis (Crab-eating macaque).